The sequence spans 240 residues: MATVKELKATARPKAGKGAARAERRAGRVPAVIYGDNKPPVTISLDDKALRQSIFAGHFLTTLFNIDLDGQKYRVIPRDYALDPVKDFPLHVDFLRLGEGATIRVSVPLHVKGAELSPGVKRGGTVNIVNHTVELEAEVDHIPQFIEVDVSKLEINNSVHLNDVALPKGVKPVLREGMTLVTVVPPSGMGEEAKGGADAAAAAAGAAAPAAGAAAPAAGAAKAPAAAAAKAPAAGGDKKK.

Residues 1–23 are disordered; it reads MATVKELKATARPKAGKGAARAE. Low complexity predominate over residues 10-19; the sequence is TARPKAGKGA.

Belongs to the bacterial ribosomal protein bL25 family. CTC subfamily. As to quaternary structure, part of the 50S ribosomal subunit; part of the 5S rRNA/L5/L18/L25 subcomplex. Contacts the 5S rRNA. Binds to the 5S rRNA independently of L5 and L18.

In terms of biological role, this is one of the proteins that binds to the 5S RNA in the ribosome where it forms part of the central protuberance. This chain is Large ribosomal subunit protein bL25, found in Afipia carboxidovorans (strain ATCC 49405 / DSM 1227 / KCTC 32145 / OM5) (Oligotropha carboxidovorans).